The chain runs to 179 residues: Large ribosomal subunit protein uL5 (179 aa).

It belongs to the universal ribosomal protein uL5 family. In terms of assembly, part of the 50S ribosomal subunit; part of the 5S rRNA/L5/L18/L25 subcomplex. Contacts the 5S rRNA and the P site tRNA. Forms a bridge to the 30S subunit in the 70S ribosome.

Functionally, this is one of the proteins that bind and probably mediate the attachment of the 5S RNA into the large ribosomal subunit, where it forms part of the central protuberance. In the 70S ribosome it contacts protein S13 of the 30S subunit (bridge B1b), connecting the 2 subunits; this bridge is implicated in subunit movement. Contacts the P site tRNA; the 5S rRNA and some of its associated proteins might help stabilize positioning of ribosome-bound tRNAs. This chain is Large ribosomal subunit protein uL5, found in Pasteurella multocida (strain Pm70).